Here is a 77-residue protein sequence, read N- to C-terminus: U8-lycotoxin-Ls1m (77 aa).

A signal peptide spans 1–20 (MKLMIFTGLVLFAIVRLIEA). Positions 21-26 (QAENEK) are excised as a propeptide.

The protein belongs to the neurotoxin 19 (CSTX) family. 08 (U8-Lctx) subfamily. Post-translationally, contains 4 disulfide bonds. In terms of tissue distribution, expressed by the venom gland.

It is found in the secreted. In Lycosa singoriensis (Wolf spider), this protein is U8-lycotoxin-Ls1m.